The primary structure comprises 88 residues: Small ribosomal subunit protein uS15 (88 aa).

It belongs to the universal ribosomal protein uS15 family. Part of the 30S ribosomal subunit. Forms a bridge to the 50S subunit in the 70S ribosome, contacting the 23S rRNA.

In terms of biological role, one of the primary rRNA binding proteins, it binds directly to 16S rRNA where it helps nucleate assembly of the platform of the 30S subunit by binding and bridging several RNA helices of the 16S rRNA. Forms an intersubunit bridge (bridge B4) with the 23S rRNA of the 50S subunit in the ribosome. In Trichlorobacter lovleyi (strain ATCC BAA-1151 / DSM 17278 / SZ) (Geobacter lovleyi), this protein is Small ribosomal subunit protein uS15.